A 395-amino-acid polypeptide reads, in one-letter code: Elongation factor Tu (395 aa).

One can recognise a tr-type G domain in the interval Lys-10–Gln-204. Positions Gly-19–Thr-26 are G1. A GTP-binding site is contributed by Gly-19–Thr-26. Mg(2+) is bound at residue Thr-26. Residues Gly-60–Asn-64 form a G2 region. Positions Asp-81 to Gly-84 are G3. Residues Asp-81–His-85 and Asn-136–Asp-139 contribute to the GTP site. A G4 region spans residues Asn-136 to Asp-139. The G5 stretch occupies residues Ser-174–Leu-176.

It belongs to the TRAFAC class translation factor GTPase superfamily. Classic translation factor GTPase family. EF-Tu/EF-1A subfamily. Monomer.

It localises to the cytoplasm. It carries out the reaction GTP + H2O = GDP + phosphate + H(+). In terms of biological role, GTP hydrolase that promotes the GTP-dependent binding of aminoacyl-tRNA to the A-site of ribosomes during protein biosynthesis. The polypeptide is Elongation factor Tu (Ligilactobacillus salivarius (strain UCC118) (Lactobacillus salivarius)).